We begin with the raw amino-acid sequence, 1723 residues long: Lys-gingipain (1723 aa).

Positions 1–24 (MRKLLLLIAASLLGVGLYAQSAKI) are cleaved as a signal peptide. Positions 25-228 (KLDAPTTRTT…ETAYKQLFNR (204 aa)) are excised as a propeptide. The Ca(2+) site is built by Asp313, Asp337, Asp339, Phe341, and Glu343. Residue His444 is the Proton donor of the active site. The active-site Nucleophile is the Cys477. Positions 482 and 491 each coordinate Ca(2+). Positions 964-985 (WDAPNGTPNPNPNPNPGTTTLS) are disordered. Ca(2+)-binding residues include Ser987, Glu989, Asp1000, Asp1002, Asp1004, His1006, Ser1021, Gly1023, Asn1042, Asp1145, Glu1146, Asp1430, Glu1432, Asp1444, Asp1446, Asp1448, Asn1450, Ser1480, Asn1495, and Asp1585.

It belongs to the peptidase C25 family. Proteolytically cleaved into a catalytic subunit and three adhesins. Arg-gingipain is involved in this post-translational processing.

Its subcellular location is the secreted. The enzyme catalyses Endopeptidase with strict specificity for lysyl bonds.. With respect to regulation, activated by the thiol-reducing agents cysteine, 2-mercaptoethanol and dithiothreitol. Inhibited by iodacetamide, iodoacetic acid, leupeptin, tosyl-L-lysine and tosyl-L-phenylalanine. Not inhibited by elastatinal, chymostatin, cystatins, alpha1-antichymotrypsin or the serine protease inhibitors phenylmethylsulfonyl fluoride and diisopropylfluorophosphate. Not inhibited by metal ion chelators. Inhibited by the heavy metal ions Fe(3+), Zn(2+), Cu(2+) and Mn(2+). Functionally, cysteine proteinase with a strong preference for substrates with Lys in the P1 position. Hydrolyzes bovine hemoglobin, bovine serum albumin, casein, human placental type I collagen and human IgA and IgG. Disrupts the functions of polymorphonuclear leukocytes. May act as a virulence factor in the development of peridontal disease. Involved in the coaggregation of P.gingivalis with other oral bacteria. The sequence is that of Lys-gingipain from Porphyromonas gingivalis (strain ATCC 33277 / DSM 20709 / CIP 103683 / JCM 12257 / NCTC 11834 / 2561).